Here is a 502-residue protein sequence, read N- to C-terminus: ATP synthase subunit alpha (502 aa).

The disordered stretch occupies residues 115–137; that stretch reads VDGLGPVETTETRPIESPAPGVM. 169 to 176 is an ATP binding site; it reads GDRQTGKT.

This sequence belongs to the ATPase alpha/beta chains family. F-type ATPases have 2 components, CF(1) - the catalytic core - and CF(0) - the membrane proton channel. CF(1) has five subunits: alpha(3), beta(3), gamma(1), delta(1), epsilon(1). CF(0) has three main subunits: a(1), b(2) and c(9-12). The alpha and beta chains form an alternating ring which encloses part of the gamma chain. CF(1) is attached to CF(0) by a central stalk formed by the gamma and epsilon chains, while a peripheral stalk is formed by the delta and b chains.

It localises to the cell membrane. It catalyses the reaction ATP + H2O + 4 H(+)(in) = ADP + phosphate + 5 H(+)(out). In terms of biological role, produces ATP from ADP in the presence of a proton gradient across the membrane. The alpha chain is a regulatory subunit. This Geobacillus stearothermophilus (Bacillus stearothermophilus) protein is ATP synthase subunit alpha.